An 88-amino-acid chain; its full sequence is Large ribosomal subunit protein bL27 (88 aa).

The disordered stretch occupies residues 1-26 (MAHKKGASSSSNGRDSEAKRLGVKRF).

The protein belongs to the bacterial ribosomal protein bL27 family.

This is Large ribosomal subunit protein bL27 from Corynebacterium glutamicum (strain R).